The sequence spans 485 residues: Probable serine/threonine-protein kinase nek1 (485 aa).

A Protein kinase domain is found at 12–283; the sequence is YLIKSQIGSG…TQQILEQVFI (272 aa). ATP contacts are provided by residues 18 to 26 and Lys41; that span reads IGSGSYGNT. Residue Asp136 is the Proton acceptor of the active site. A compositionally biased stretch (polar residues) spans 354 to 365; the sequence is KNQQQQSPQKLE. Residues 354–419 form a disordered region; that stretch reads KNQQQQSPQK…NNDKNNNINN (66 aa). Positions 366-419 are enriched in low complexity; it reads NNNNNNNDNNNNNNNNNNNNNNNNNNNNNNNNNNNNNNNNNNNNNNDKNNNINN.

This sequence belongs to the protein kinase superfamily. NEK Ser/Thr protein kinase family. NIMA subfamily.

The enzyme catalyses L-seryl-[protein] + ATP = O-phospho-L-seryl-[protein] + ADP + H(+). The catalysed reaction is L-threonyl-[protein] + ATP = O-phospho-L-threonyl-[protein] + ADP + H(+). The sequence is that of Probable serine/threonine-protein kinase nek1 (nek1) from Dictyostelium discoideum (Social amoeba).